Reading from the N-terminus, the 72-residue chain is Translation initiation factor IF-1 (72 aa).

Residues 1 to 72 enclose the S1-like domain; the sequence is MSKDDVIEMQ…TRGRITWRAK (72 aa).

This sequence belongs to the IF-1 family. Component of the 30S ribosomal translation pre-initiation complex which assembles on the 30S ribosome in the order IF-2 and IF-3, IF-1 and N-formylmethionyl-tRNA(fMet); mRNA recruitment can occur at any time during PIC assembly.

The protein localises to the cytoplasm. Functionally, one of the essential components for the initiation of protein synthesis. Stabilizes the binding of IF-2 and IF-3 on the 30S subunit to which N-formylmethionyl-tRNA(fMet) subsequently binds. Helps modulate mRNA selection, yielding the 30S pre-initiation complex (PIC). Upon addition of the 50S ribosomal subunit IF-1, IF-2 and IF-3 are released leaving the mature 70S translation initiation complex. This Clostridium kluyveri (strain ATCC 8527 / DSM 555 / NBRC 12016 / NCIMB 10680 / K1) protein is Translation initiation factor IF-1.